The chain runs to 509 residues: Hexokinase-4, chloroplastic (509 aa).

The N-terminal 37 residues, 1–37 (MSAAAAIASPIPAAIAVVQQQRRGRSRGGGSGAAAVR), are a transit peptide targeting the chloroplast. The Hexokinase domain maps to 45-496 (SAIAPILADL…SGIGAALLAA (452 aa)). Residues 100–238 (TGNETGLFYA…GLDMRVSALV (139 aa)) form a hexokinase small subdomain region. Residues glycine 114, threonine 115, and asparagine 116 each contribute to the ADP site. D-glucose-binding residues include threonine 204, lysine 205, asparagine 239, and aspartate 240. The hexokinase large subdomain stretch occupies residues 239–485 (NDTVGTLAGA…NRIAIEHTKD (247 aa)). Threonine 263 is an ADP binding site. 3 residues coordinate D-glucose: asparagine 266, glutamate 294, and glutamate 324. Glycine 450 is a binding site for ADP.

It belongs to the hexokinase family. In terms of tissue distribution, expressed in roots, leaves, flowers, immature seeds, endosperm and seed coat.

The protein localises to the plastid. Its subcellular location is the chloroplast stroma. It carries out the reaction a D-hexose + ATP = a D-hexose 6-phosphate + ADP + H(+). The enzyme catalyses D-fructose + ATP = D-fructose 6-phosphate + ADP + H(+). The catalysed reaction is D-glucose + ATP = D-glucose 6-phosphate + ADP + H(+). It participates in carbohydrate metabolism; hexose metabolism. It functions in the pathway carbohydrate degradation; glycolysis; D-glyceraldehyde 3-phosphate and glycerone phosphate from D-glucose: step 1/4. Functionally, fructose and glucose phosphorylating enzyme. The sequence is that of Hexokinase-4, chloroplastic (HXK4) from Oryza sativa subsp. japonica (Rice).